Consider the following 126-residue polypeptide: Holo-[acyl-carrier-protein] synthase (126 aa).

Aspartate 9 and glutamate 58 together coordinate Mg(2+).

This sequence belongs to the P-Pant transferase superfamily. AcpS family. In terms of assembly, homodimer. Mg(2+) is required as a cofactor.

It is found in the cytoplasm. It catalyses the reaction apo-[ACP] + CoA = holo-[ACP] + adenosine 3',5'-bisphosphate + H(+). Functionally, transfers the 4'-phosphopantetheine moiety from coenzyme A to the 'Ser-36' of acyl-carrier-protein. This is Holo-[acyl-carrier-protein] synthase from Escherichia coli O157:H7.